We begin with the raw amino-acid sequence, 198 residues long: Ribonuclease HII (198 aa).

One can recognise an RNase H type-2 domain in the interval 14–198 (GVIAGVDEVG…RNFAPISRAL (185 aa)). 3 residues coordinate a divalent metal cation: Asp-20, Glu-21, and Asp-112.

This sequence belongs to the RNase HII family. It depends on Mn(2+) as a cofactor. The cofactor is Mg(2+).

The protein resides in the cytoplasm. The enzyme catalyses Endonucleolytic cleavage to 5'-phosphomonoester.. Functionally, endonuclease that specifically degrades the RNA of RNA-DNA hybrids. This Wolbachia sp. subsp. Drosophila simulans (strain wRi) protein is Ribonuclease HII.